The primary structure comprises 124 residues: Small ribosomal subunit protein bS6 (124 aa).

The interval 96 to 124 (ETGPSPMMKEVQREEAKKAAAAQPTEAQA) is disordered. Over residues 114–124 (AAAAQPTEAQA) the composition is skewed to low complexity.

Belongs to the bacterial ribosomal protein bS6 family.

Binds together with bS18 to 16S ribosomal RNA. The sequence is that of Small ribosomal subunit protein bS6 from Burkholderia vietnamiensis (strain G4 / LMG 22486) (Burkholderia cepacia (strain R1808)).